A 71-amino-acid polypeptide reads, in one-letter code: Sec-independent protein translocase protein TatA (71 aa).

A helical transmembrane segment spans residues 1 to 21 (MGASPVQLLIVLFIAVLVFGG).

The protein belongs to the TatA/E family. The Tat system comprises two distinct complexes: a TatABC complex, containing multiple copies of TatA, TatB and TatC subunits, and a separate TatA complex, containing only TatA subunits. Substrates initially bind to the TatABC complex, which probably triggers association of the separate TatA complex to form the active translocon.

Its subcellular location is the cell inner membrane. In terms of biological role, part of the twin-arginine translocation (Tat) system that transports large folded proteins containing a characteristic twin-arginine motif in their signal peptide across membranes. TatA could form the protein-conducting channel of the Tat system. The chain is Sec-independent protein translocase protein TatA from Dichelobacter nodosus (strain VCS1703A).